A 65-amino-acid polypeptide reads, in one-letter code: Hainantoxin-X (65 aa).

The signal sequence occupies residues 1-20 (MNMKILVLVAVLCLVVSTHA). Residues 21–37 (ERHSKTDMEDSPMIQER) constitute a propeptide that is removed on maturation. 3 cysteine pairs are disulfide-bonded: C39–C56, C46–C59, and C55–C64.

Belongs to the neurotoxin 36 family. 02 subfamily. As to expression, expressed by the venom gland.

Its subcellular location is the secreted. Its function is as follows. Reversibly blocks N-type calcium channels (Cav2.2/CACNA1B) in rat dorsal root ganglion cells. Elicits no toxic symptoms in either vertebrates or invertebrates during a period of 48 hours post-injection, when it was assayed in vivo by direct injection into mice and cockroaches. The polypeptide is Hainantoxin-X (Cyriopagopus hainanus (Chinese bird spider)).